We begin with the raw amino-acid sequence, 273 residues long: Large ribosomal subunit protein uL2 (273 aa).

Residues 221–263 (RGTAMNPVDHPHGGGEGRNFGKHPVSPWGLKTKGKKTRRNKRT) form a disordered region. Residues 252–263 (TKGKKTRRNKRT) are compositionally biased toward basic residues.

This sequence belongs to the universal ribosomal protein uL2 family. Part of the 50S ribosomal subunit. Forms a bridge to the 30S subunit in the 70S ribosome.

One of the primary rRNA binding proteins. Required for association of the 30S and 50S subunits to form the 70S ribosome, for tRNA binding and peptide bond formation. It has been suggested to have peptidyltransferase activity; this is somewhat controversial. Makes several contacts with the 16S rRNA in the 70S ribosome. This Buchnera aphidicola subsp. Cinara cedri (strain Cc) protein is Large ribosomal subunit protein uL2.